We begin with the raw amino-acid sequence, 749 residues long: Tryptophan 2-monooxygenase (749 aa).

S232, E252, K260, and R280 together coordinate FMN. R280 serves as a coordination point for substrate.

It belongs to the tryptophan 2-monooxygenase family. FMN serves as cofactor.

The catalysed reaction is L-tryptophan + O2 = indole-3-acetamide + CO2 + H2O. It participates in plant hormone metabolism; auxin biosynthesis. This is Tryptophan 2-monooxygenase (aux1) from Rhizobium rhizogenes (Agrobacterium rhizogenes).